The primary structure comprises 969 residues: Protein translocase subunit SecA (969 aa).

ATP contacts are provided by residues glutamine 99, 117–121 (GEGKT), and aspartate 631.

Belongs to the SecA family. Monomer and homodimer. Part of the essential Sec protein translocation apparatus which comprises SecA, SecYEG and auxiliary proteins SecDF. Other proteins may also be involved.

It localises to the cell inner membrane. Its subcellular location is the cytoplasm. It catalyses the reaction ATP + H2O + cellular proteinSide 1 = ADP + phosphate + cellular proteinSide 2.. Its function is as follows. Part of the Sec protein translocase complex. Interacts with the SecYEG preprotein conducting channel. Has a central role in coupling the hydrolysis of ATP to the transfer of proteins into and across the cell membrane, serving as an ATP-driven molecular motor driving the stepwise translocation of polypeptide chains across the membrane. This Chlamydia trachomatis serovar A (strain ATCC VR-571B / DSM 19440 / HAR-13) protein is Protein translocase subunit SecA.